A 189-amino-acid chain; its full sequence is Thymidine kinase (189 aa).

ATP contacts are provided by residues 9-16 and 85-88; these read GTMNSGKT and DESQ. The active-site Proton acceptor is the Glu86. Zn(2+) is bound by residues Cys143, Cys146, Cys180, and His183.

This sequence belongs to the thymidine kinase family. In terms of assembly, homotetramer.

Its subcellular location is the cytoplasm. It carries out the reaction thymidine + ATP = dTMP + ADP + H(+). The polypeptide is Thymidine kinase (Streptococcus pyogenes serotype M18 (strain MGAS8232)).